We begin with the raw amino-acid sequence, 233 residues long: Antiholin-like protein LrgB (233 aa).

7 consecutive transmembrane segments (helical) span residues 7 to 27 (INTPYFGILLSLIPFIIATFL), 33 to 53 (GFFLFTPLFVSMVVGIAFLKL), 63 to 83 (IGGDIINFFLEPATICFAIPL), 97 to 117 (ILGGITLGTTAALVCIYLIAE), 124 to 144 (GIIASMLPQGATTAIALPVSA), 152 to 172 (LTSLAVILNGVIIYALGSKLI), and 212 to 232 (ISLVIVGVIVVIVAPILATLL).

It belongs to the CidB/LrgB family. LrgB subfamily.

The protein localises to the cell membrane. Inhibits the expression or activity of extracellular murein hydrolases by interacting, possibly with LrgA, with the holin-like proteins CidA and/or CidB. The LrgAB and CidAB proteins may affect the proton motive force of the membrane. May be involved in programmed cell death (PCD), possibly triggering PCD in response to antibiotics and environmental stresses. In Staphylococcus saprophyticus subsp. saprophyticus (strain ATCC 15305 / DSM 20229 / NCIMB 8711 / NCTC 7292 / S-41), this protein is Antiholin-like protein LrgB.